Consider the following 112-residue polypeptide: Truncated ankyrin repeat protein B25 (112 aa).

This sequence belongs to the orthopoxviruses B25 protein family.

This chain is Truncated ankyrin repeat protein B25, found in Bos taurus (Bovine).